A 112-amino-acid polypeptide reads, in one-letter code: Putative UPF0320 protein YEL074W (112 aa).

The tract at residues 93 to 112 (EKSPSKSPKHKNILPFNFTK) is disordered.

The protein belongs to the UPF0320 family.

The polypeptide is Putative UPF0320 protein YEL074W (Saccharomyces cerevisiae (strain ATCC 204508 / S288c) (Baker's yeast)).